The sequence spans 127 residues: Small ribosomal subunit protein uS11 (127 aa).

Belongs to the universal ribosomal protein uS11 family. In terms of assembly, part of the 30S ribosomal subunit. Interacts with proteins S7 and S18. Binds to IF-3.

In terms of biological role, located on the platform of the 30S subunit, it bridges several disparate RNA helices of the 16S rRNA. Forms part of the Shine-Dalgarno cleft in the 70S ribosome. The chain is Small ribosomal subunit protein uS11 from Rickettsia rickettsii (strain Iowa).